A 702-amino-acid chain; its full sequence is Putative GMC-type oxidoreductase R135 (702 aa).

The helical transmembrane segment at 55–75 (LTGDIVIIGAGAAGSLLAHYL) threads the bilayer. 58-88 (DIVIIGAGAAGSLLAHYLARFSNMKIILLEA) contributes to the FAD binding site. H628 is an active-site residue.

The protein belongs to the GMC oxidoreductase family. Requires FAD as cofactor.

Its subcellular location is the virion. The protein resides in the host membrane. This Acanthamoeba polyphaga (Amoeba) protein is Putative GMC-type oxidoreductase R135.